Reading from the N-terminus, the 120-residue chain is Cytochrome b5 (120 aa).

In terms of domain architecture, Cytochrome b5 heme-binding spans 2 to 78 (PKVYSYQEVA…LKGLYIGDVD (77 aa)). 2 residues coordinate heme: histidine 37 and histidine 61. A helical membrane pass occupies residues 98 to 118 (GSGTLVVILAILMLGVAYYLL).

This sequence belongs to the cytochrome b5 family.

It is found in the endoplasmic reticulum membrane. The protein localises to the microsome membrane. Its function is as follows. Membrane bound hemoprotein which function as an electron carrier for several membrane bound oxygenases. It plays a role in fatty-acid desaturation and is also involved in several steps of the sterol biosynthesis pathway, particularly in the 4-demethylation of the 4,4'-dimethyl zymosterol. The sequence is that of Cytochrome b5 (CYB5) from Saccharomyces cerevisiae (strain ATCC 204508 / S288c) (Baker's yeast).